A 482-amino-acid polypeptide reads, in one-letter code: Long chain base biosynthesis protein 1c (482 aa).

A helical transmembrane segment spans residues 33–53 (FGIHIDGHLVVEGLLIAAILF).

The protein belongs to the class-II pyridoxal-phosphate-dependent aminotransferase family. Heterodimer with LCB2. Component of the serine palmitoyltransferase (SPT) complex, composed of LCB1 and LCB2. It depends on pyridoxal 5'-phosphate as a cofactor.

The protein localises to the endoplasmic reticulum membrane. It catalyses the reaction L-serine + hexadecanoyl-CoA + H(+) = 3-oxosphinganine + CO2 + CoA. The protein operates within lipid metabolism; sphingolipid metabolism. In terms of biological role, serine palmitoyltransferase (SPT). The heterodimer formed with LCB2 constitutes the catalytic core. This Oryza sativa subsp. japonica (Rice) protein is Long chain base biosynthesis protein 1c.